A 336-amino-acid chain; its full sequence is HTH-type transcriptional repressor PurR (336 aa).

The 55-residue stretch at 2 to 56 (ATIKDVAKMAGVSTTTVSHVINKTRFVAKDTEEAVLSAIKQLNYSPSAVARSLKV) folds into the HTH lacI-type domain. The H-T-H motif DNA-binding region spans 4 to 23 (IKDVAKMAGVSTTTVSHVIN). The DNA-binding element occupies 48–56 (SAVARSLKV). Y73, K188, T190, F219, and D273 together coordinate hypoxanthine.

As to quaternary structure, homodimer.

The protein operates within purine metabolism; purine nucleotide biosynthesis [regulation]. In terms of biological role, is the main repressor of the genes involved in the de novo synthesis of purine nucleotides, regulating purB, purC, purEK, purF, purHD, purL, purMN and guaBA expression. PurR is allosterically activated to bind its cognate DNA by binding the purine corepressors, hypoxanthine or guanine, thereby effecting transcription repression. The polypeptide is HTH-type transcriptional repressor PurR (Haemophilus influenzae (strain 86-028NP)).